Reading from the N-terminus, the 448-residue chain is Homogentisate 1,2-dioxygenase (448 aa).

His303 acts as the Proton acceptor in catalysis. Positions 346 and 352 each coordinate Fe cation. 2 residues coordinate homogentisate: Tyr361 and His382. His382 serves as a coordination point for Fe cation.

The protein belongs to the homogentisate dioxygenase family. As to quaternary structure, hexamer; dimer of trimers. Requires Fe cation as cofactor.

It carries out the reaction homogentisate + O2 = 4-maleylacetoacetate + H(+). Its pathway is amino-acid degradation; L-phenylalanine degradation; acetoacetate and fumarate from L-phenylalanine: step 4/6. In terms of biological role, involved in the catabolism of homogentisate (2,5-dihydroxyphenylacetate or 2,5-OH-PhAc), a central intermediate in the degradation of phenylalanine and tyrosine. Catalyzes the oxidative ring cleavage of the aromatic ring of homogentisate to yield maleylacetoacetate. This Rhodopseudomonas palustris (strain BisB18) protein is Homogentisate 1,2-dioxygenase.